The primary structure comprises 202 residues: Ribonuclease HII (202 aa).

In terms of domain architecture, RNase H type-2 spans 1–195 (MIVAGVDEVG…PELKGGSPAG (195 aa)). Positions 7, 8, and 103 each coordinate a divalent metal cation.

It belongs to the RNase HII family. It depends on Mn(2+) as a cofactor. Requires Mg(2+) as cofactor.

The protein localises to the cytoplasm. It carries out the reaction Endonucleolytic cleavage to 5'-phosphomonoester.. Functionally, endonuclease that specifically degrades the RNA of RNA-DNA hybrids. This is Ribonuclease HII from Synechococcus sp. (strain RCC307).